A 537-amino-acid chain; its full sequence is uncharacterized protein (537 aa).

The N-terminal stretch at 1–15 (MALFQLFSFLNVTLG) is a signal peptide. The next 2 helical transmembrane spans lie at 459 to 479 (VLFS…GCCF) and 490 to 510 (VILL…LGFT).

It localises to the host membrane. This is an uncharacterized protein from Citrus sinensis (Sweet orange).